The primary structure comprises 429 residues: UDP-N-acetylglucosamine 1-carboxyvinyltransferase (429 aa).

22–23 (KN) is a phosphoenolpyruvate binding site. Position 102 (Arg102) interacts with UDP-N-acetyl-alpha-D-glucosamine. Cys126 functions as the Proton donor in the catalytic mechanism. The residue at position 126 (Cys126) is a 2-(S-cysteinyl)pyruvic acid O-phosphothioketal. UDP-N-acetyl-alpha-D-glucosamine-binding positions include 131 to 135 (RPVDL), Asp316, and Ile338.

The protein belongs to the EPSP synthase family. MurA subfamily.

Its subcellular location is the cytoplasm. The catalysed reaction is phosphoenolpyruvate + UDP-N-acetyl-alpha-D-glucosamine = UDP-N-acetyl-3-O-(1-carboxyvinyl)-alpha-D-glucosamine + phosphate. It participates in cell wall biogenesis; peptidoglycan biosynthesis. Its function is as follows. Cell wall formation. Adds enolpyruvyl to UDP-N-acetylglucosamine. The protein is UDP-N-acetylglucosamine 1-carboxyvinyltransferase of Methylocella silvestris (strain DSM 15510 / CIP 108128 / LMG 27833 / NCIMB 13906 / BL2).